Reading from the N-terminus, the 532-residue chain is Vesicular acetylcholine transporter unc-17 (532 aa).

At 1 to 31 the chain is on the cytoplasmic side; the sequence is MGFNVPVINRDSEILKADAKKWLEQQDNQKK. Residues 32 to 52 form a helical membrane-spanning segment; that stretch reads CVLVIVSIALLLDNMLYMVIV. Over 53–101 the chain is Lumenal, vesicle; sequence PIIPKYLRDIHNYQVTFEGYHNETSQLANGTYLVREVGGRINFLDEELE. N-linked (GlcNAc...) asparagine glycosylation is found at Asn-74 and Asn-81. A helical transmembrane segment spans residues 102-121; the sequence is LGWLFASKALLQIFVNPFSG. At 122-130 the chain is on the cytoplasmic side; it reads YIIDRVGYE. The helical transmembrane segment at 131–151 threads the bilayer; that stretch reads IPMILGLCTMFFSTAIFALGK. Residues 152–160 lie on the Lumenal, vesicle side of the membrane; the sequence is SYGVLLFAR. A helical transmembrane segment spans residues 161 to 180; it reads SLQGFGSAFADTSGLAMIAD. Residues 181-191 are Cytoplasmic-facing; it reads RFTEENERSAA. A helical membrane pass occupies residues 192–213; the sequence is LGIALAFISFGCLVAPPFGSVL. Topologically, residues 214–219 are lumenal, vesicle; that stretch reads YSLAGK. A helical transmembrane segment spans residues 220–242; it reads PVPFLILSFVCLADAIAVFMVIN. Topologically, residues 243-266 are cytoplasmic; that stretch reads PHRRGTDSHGEKVQGTPMWRLFMD. A helical membrane pass occupies residues 267–286; that stretch reads PFIACCSGALIMANVSLAFL. Residues 287–303 are Lumenal, vesicle-facing; that stretch reads EPTITTWMSEMMPDTPG. A helical transmembrane segment spans residues 304–328; the sequence is WLVGVIWLPPFFPHVLGVYVTVKML. The Cytoplasmic portion of the chain corresponds to 329-335; that stretch reads RAFPHHT. The helical transmembrane segment at 336 to 356 threads the bilayer; sequence WAIAMVGLAMEGIACFAIPYT. Residues 357 to 367 lie on the Lumenal, vesicle side of the membrane; sequence TSVMQLVIPLS. A helical membrane pass occupies residues 368–388; the sequence is FVCFGIALIDTSLLPMLGHLV. Residues 389–393 are Cytoplasmic-facing; the sequence is DTRHV. The chain crosses the membrane as a helical span at residues 394-412; that stretch reads SVYGSVYAIADISYSLAYA. Residues 413 to 418 lie on the Lumenal, vesicle side of the membrane; that stretch reads FGPIIA. Residues 419 to 440 form a helical membrane-spanning segment; it reads GWIVTNWGFTALNIIIFATNVT. The Cytoplasmic portion of the chain corresponds to 441–532; that stretch reads YAPVLFLLRK…AGYDPLNPQW (92 aa).

The protein belongs to the major facilitator superfamily. Vesicular transporter family. As to expression, detected in most regions of the nervous system including the nerve ring, the ventral and dorsal nerve cords, and the pharyngeal nervous system. Expressed in most cholinergic neurons. In addition, expressed in SIA, SIB and SMB sublateral motor neurons.

It localises to the cytoplasmic vesicle. It is found in the secretory vesicle. The protein localises to the synaptic vesicle membrane. Functionally, involved in acetylcholine transport into synaptic vesicles. In Caenorhabditis elegans, this protein is Vesicular acetylcholine transporter unc-17.